Consider the following 506-residue polypeptide: Anaerobic nitric oxide reductase transcription regulator NorR (506 aa).

Aspartate 57 carries the post-translational modification 4-aspartylphosphate. A Sigma-54 factor interaction domain is found at 187 to 416 (MIGLSPAMTQ…LEHAIHRAVV (230 aa)). Residues 215–222 (GETGTGKE) and 278–287 (ADNGTLFLDE) each bind ATP. A DNA-binding region (H-T-H motif) is located at residues 481 to 500 (WAASARALETDVANLHRLAK).

Its pathway is nitrogen metabolism; nitric oxide reduction. In terms of biological role, required for the expression of anaerobic nitric oxide (NO) reductase, acts as a transcriptional activator for at least the norVW operon. Activation also requires sigma-54. The chain is Anaerobic nitric oxide reductase transcription regulator NorR from Salmonella choleraesuis (strain SC-B67).